Reading from the N-terminus, the 347-residue chain is Phenylalanine--tRNA ligase alpha subunit (347 aa).

The tract at residues 83 to 111 is disordered; that stretch reads QNLSGGDDSGADPTFDPTLPGTRPSLGHI. Glu-274 lines the Mg(2+) pocket.

It belongs to the class-II aminoacyl-tRNA synthetase family. Phe-tRNA synthetase alpha subunit type 1 subfamily. In terms of assembly, tetramer of two alpha and two beta subunits. Mg(2+) is required as a cofactor.

It is found in the cytoplasm. The enzyme catalyses tRNA(Phe) + L-phenylalanine + ATP = L-phenylalanyl-tRNA(Phe) + AMP + diphosphate + H(+). This Rhodopirellula baltica (strain DSM 10527 / NCIMB 13988 / SH1) protein is Phenylalanine--tRNA ligase alpha subunit.